Reading from the N-terminus, the 160-residue chain is Cytochrome b6-f complex subunit 4 (160 aa).

Transmembrane regions (helical) follow at residues 36 to 56 (LLYV…GLAV), 95 to 115 (LLGV…PFIE), and 131 to 151 (LVFI…CLPI).

It belongs to the cytochrome b family. PetD subfamily. The 4 large subunits of the cytochrome b6-f complex are cytochrome b6, subunit IV (17 kDa polypeptide, petD), cytochrome f and the Rieske protein, while the 4 small subunits are petG, petL, petM and petN. The complex functions as a dimer.

The protein resides in the plastid. It localises to the chloroplast thylakoid membrane. In terms of biological role, component of the cytochrome b6-f complex, which mediates electron transfer between photosystem II (PSII) and photosystem I (PSI), cyclic electron flow around PSI, and state transitions. This chain is Cytochrome b6-f complex subunit 4, found in Trieres chinensis (Marine centric diatom).